The sequence spans 485 residues: MNEPLISDISRTGRKGYSLNSSDLIRTPHSQLIPGKFLRQSPAELPEVPESEVVRHFLRLSTLNYHVDKDMYPLGSCTMKYNPKINDETCSLEGFAALHPMQPESTVQGALQLMHELSGMLAEITGMASVTLQPAAGAHGELAGILLIKKYHEAQHSKRTTLLVVDSAHGTNPASAALAGYTIVSVKSNGIGRTDLNDLKEKLNGDVAALMLTNPNTIGLFEKEIVAIADMVHKNGSLLYMDGANMNALLGITRPGDMGFDVVHLNLHKTFSAPHGGGGPGSGPVGVCEKLIPHLPVPVIEKRATSEGARYHLTGDCPDSIGRMMNFHGNFAVLIRAYTYIRMLGAEGLRRVSENAIINANYLLSRLDGAYSLPYPKPVLHEFCLSGDLQKKSHGVRTLDIAKRLLDYGFHAPTIYFPLIVSEALMIEPTETESRETLDRFADAMLQIAKEAEECPETVLAAPETTPVRRLDEAMASRQLNICCR.

K269 carries the post-translational modification N6-(pyridoxal phosphate)lysine.

This sequence belongs to the GcvP family. C-terminal subunit subfamily. As to quaternary structure, the glycine cleavage system is composed of four proteins: P, T, L and H. In this organism, the P 'protein' is a heterodimer of two subunits. It depends on pyridoxal 5'-phosphate as a cofactor.

It carries out the reaction N(6)-[(R)-lipoyl]-L-lysyl-[glycine-cleavage complex H protein] + glycine + H(+) = N(6)-[(R)-S(8)-aminomethyldihydrolipoyl]-L-lysyl-[glycine-cleavage complex H protein] + CO2. The glycine cleavage system catalyzes the degradation of glycine. The P protein binds the alpha-amino group of glycine through its pyridoxal phosphate cofactor; CO(2) is released and the remaining methylamine moiety is then transferred to the lipoamide cofactor of the H protein. This is Probable glycine dehydrogenase (decarboxylating) subunit 2 from Chlorobium phaeovibrioides (strain DSM 265 / 1930) (Prosthecochloris vibrioformis (strain DSM 265)).